Reading from the N-terminus, the 318-residue chain is MNGDHMVLGSSVTDKKAIILVTILLLLRLVAIAGNGFITAALGVEWVLRRMLLPCDKLLVSLGASHFCLQSVVMGKTIYVFLYPMAFPYNPVLQFLAFQWDFLNAATLWFSTWLSVFYCVKIATFTHPVFFWLKHKLSGWLPWMVFSYVGLSSFTTILFFIGNHRMYQNYLKNHLQPWNVTGNSIRSYCEKFYLFPLKMITWTMPTAVFFICMILLITSLGRHMKKALLTTSGFREPSVQAHIKALLALLSFAMLFISYFLSLVFSAAGIFPPLDFKFWVWESVIYLCAAVHPIILLFSNCRLRAVLKSRRSSRCGTP.

The Extracellular segment spans residues Met-1–Val-7. The helical transmembrane segment at Leu-8–Arg-28 threads the bilayer. The Cytoplasmic segment spans residues Leu-29 to Ala-40. A helical transmembrane segment spans residues Ala-41 to Ser-61. The Extracellular portion of the chain corresponds to Leu-62–Pro-88. The chain crosses the membrane as a helical span at residues Tyr-89–Trp-109. Residues Phe-110–Pro-128 are Cytoplasmic-facing. Residues Val-129–Val-149 form a helical membrane-spanning segment. At Gly-150–Asn-183 the chain is on the extracellular side. Residue Asn-179 is glycosylated (N-linked (GlcNAc...) asparagine). A helical membrane pass occupies residues Ser-184–Met-204. At Pro-205–Phe-234 the chain is on the cytoplasmic side. A helical membrane pass occupies residues Arg-235 to Leu-255. The Extracellular segment spans residues Phe-256–Val-264. A helical transmembrane segment spans residues Phe-265–Ile-285. Residues Tyr-286 to Pro-318 lie on the Cytoplasmic side of the membrane.

Belongs to the G-protein coupled receptor T2R family.

It localises to the membrane. Receptor that may play a role in the perception of bitterness and is gustducin-linked. May play a role in sensing the chemical composition of the gastrointestinal content. The activity of this receptor may stimulate alpha gustducin, mediate PLC-beta-2 activation and lead to the gating of TRPM5. The chain is Taste receptor type 2 member 60 (TAS2R60) from Pan troglodytes (Chimpanzee).